We begin with the raw amino-acid sequence, 235 residues long: Endonuclease V (235 aa).

Asp45 and Asp115 together coordinate Mg(2+).

This sequence belongs to the endonuclease V family. Mg(2+) is required as a cofactor.

It localises to the cytoplasm. It catalyses the reaction Endonucleolytic cleavage at apurinic or apyrimidinic sites to products with a 5'-phosphate.. In terms of biological role, DNA repair enzyme involved in the repair of deaminated bases. Selectively cleaves double-stranded DNA at the second phosphodiester bond 3' to a deoxyinosine leaving behind the intact lesion on the nicked DNA. This chain is Endonuclease V, found in Bacillus thuringiensis subsp. konkukian (strain 97-27).